A 467-amino-acid chain; its full sequence is Glutamate--tRNA ligase (467 aa).

The 'HIGH' region signature appears at 14-24 (PSPTGFLHLGG). Over residues 124–134 (PRYDGTWRPEP) the composition is skewed to basic and acidic residues. The tract at residues 124–156 (PRYDGTWRPEPGKTLPPVPAGRKPVVRFKNPQD) is disordered. The 'KMSKS' region motif lies at 246-250 (KLSKR). Lys249 is a binding site for ATP.

Belongs to the class-I aminoacyl-tRNA synthetase family. Glutamate--tRNA ligase type 1 subfamily. As to quaternary structure, monomer.

It is found in the cytoplasm. It catalyses the reaction tRNA(Glu) + L-glutamate + ATP = L-glutamyl-tRNA(Glu) + AMP + diphosphate. Catalyzes the attachment of glutamate to tRNA(Glu) in a two-step reaction: glutamate is first activated by ATP to form Glu-AMP and then transferred to the acceptor end of tRNA(Glu). The polypeptide is Glutamate--tRNA ligase (Bordetella petrii (strain ATCC BAA-461 / DSM 12804 / CCUG 43448)).